Here is a 1088-residue protein sequence, read N- to C-terminus: DNA damage-binding protein 1b (1088 aa).

This sequence belongs to the DDB1 family. In terms of assembly, interacts with DDA1. Binds to KTN80.2/DWA3. Interacts with HTD1.

The protein resides in the nucleus. It functions in the pathway protein modification; protein ubiquitination. Functionally, component of light signal transduction machinery. Involved in repression of photomorphogenesis in darkness. Plays a role in DNA repair by forming with DDB2 the UV-damaged DNA-binding protein complex (UV-DDB). This Arabidopsis thaliana (Mouse-ear cress) protein is DNA damage-binding protein 1b.